The sequence spans 115 residues: Large ribosomal subunit protein eL30 (115 aa).

This sequence belongs to the eukaryotic ribosomal protein eL30 family. In terms of assembly, component of the large ribosomal subunit.

The protein localises to the cytoplasm. In terms of biological role, component of the large ribosomal subunit. The ribosome is a large ribonucleoprotein complex responsible for the synthesis of proteins in the cell. This Gallus gallus (Chicken) protein is Large ribosomal subunit protein eL30 (RPL30).